The following is a 1790-amino-acid chain: Protein FAM186A (1790 aa).

It belongs to the FAM186 family.

The polypeptide is Protein FAM186A (FAM186A) (Mus musculus (Mouse)).